Reading from the N-terminus, the 142-residue chain is Hemoglobin subunit alpha (142 aa).

The Globin domain occupies 2 to 142; the sequence is VLSPADKTNV…VSTVLTSKYR (141 aa). Ser-4 is modified (phosphoserine). N6-succinyllysine is present on Lys-8. Phosphothreonine is present on Thr-9. Position 12 is an N6-succinyllysine (Lys-12). Lys-17 is subject to N6-acetyllysine; alternate. The residue at position 17 (Lys-17) is an N6-succinyllysine; alternate. Tyr-25 is subject to Phosphotyrosine. At Ser-36 the chain carries Phosphoserine. N6-succinyllysine is present on Lys-41. Phosphoserine is present on Ser-50. An O2-binding site is contributed by His-59. Position 88 (His-88) interacts with heme b. Ser-103 carries the post-translational modification Phosphoserine. A Phosphothreonine modification is found at Thr-109. Ser-125 bears the Phosphoserine mark. A phosphothreonine mark is found at Thr-135 and Thr-138. A Phosphoserine modification is found at Ser-139.

It belongs to the globin family. In terms of assembly, heterotetramer of two alpha chains and two beta chains. In terms of tissue distribution, red blood cells.

Functionally, involved in oxygen transport from the lung to the various peripheral tissues. Its function is as follows. Hemopressin acts as an antagonist peptide of the cannabinoid receptor CNR1. Hemopressin-binding efficiently blocks cannabinoid receptor CNR1 and subsequent signaling. In Ailuropoda melanoleuca (Giant panda), this protein is Hemoglobin subunit alpha (HBA).